The primary structure comprises 433 residues: Xylose isomerase (433 aa).

Residues His97 and Asp100 contribute to the active site. 7 residues coordinate Mg(2+): Glu228, Glu264, His267, Asp292, Asp303, Asp305, and Asp334.

The protein belongs to the xylose isomerase family. Homotetramer. The cofactor is Mg(2+).

The protein resides in the cytoplasm. The catalysed reaction is alpha-D-xylose = alpha-D-xylulofuranose. The sequence is that of Xylose isomerase from Fervidobacterium gondwanense.